Here is a 1065-residue protein sequence, read N- to C-terminus: DNA ligase 4 (1065 aa).

Residues 1-20 (MAVHAPYNHAPPPTQEINGQ) are disordered. ATP contacts are provided by E295, K297, L298, R302, E357, F387, E452, K457, K474, and K476. K297 functions as the N6-AMP-lysine intermediate in the catalytic mechanism. E357 serves as a coordination point for Mg(2+). Residue E452 participates in Mg(2+) binding. Residues 696-775 (VETSIFSDMT…TALPFLKEFL (80 aa)) enclose the BRCT 1 domain. Residues 825 to 928 (GEDKDEIDVE…SDVGVNGDDY (104 aa)) form a disordered region. 2 stretches are compositionally biased toward basic and acidic residues: residues 834–864 (EESRESKNRRMAREDLKEKESNRTLEQKKLQ) and 886–900 (MSLKEESDTDSERSR). In terms of domain architecture, BRCT 2 spans 954–1064 (DEDRIFYHLA…TLLDEDLYKP (111 aa)).

It belongs to the ATP-dependent DNA ligase family. Requires Mg(2+) as cofactor.

The protein localises to the nucleus. It catalyses the reaction ATP + (deoxyribonucleotide)n-3'-hydroxyl + 5'-phospho-(deoxyribonucleotide)m = (deoxyribonucleotide)n+m + AMP + diphosphate.. DNA ligase involved in DNA non-homologous end joining (NHEJ); required for double-strand break (DSB) repair. The sequence is that of DNA ligase 4 (LIG4) from Cryptococcus neoformans var. neoformans serotype D (strain B-3501A) (Filobasidiella neoformans).